The following is a 114-amino-acid chain: Small ribosomal subunit protein bS6 (114 aa).

This sequence belongs to the bacterial ribosomal protein bS6 family.

Functionally, binds together with bS18 to 16S ribosomal RNA. The sequence is that of Small ribosomal subunit protein bS6 from Phocaeicola vulgatus (strain ATCC 8482 / DSM 1447 / JCM 5826 / CCUG 4940 / NBRC 14291 / NCTC 11154) (Bacteroides vulgatus).